Reading from the N-terminus, the 310-residue chain is MPLRLIFMGTPDFAVPTLRTLAAAGHQIVAVYSREAKPSGRGMKLQPTPVAQEAERLGIPVLTPKTLRTPEAAAEFAAFQADAAVVVAYGMILPQPILDAPTFGCFNLHGSLLPRWRGAAPINRAIMAGDPEAGVMVMKMDIGLDTGDVALTGRIALTDAMTASDLHDALAPLGAELMVEAMAQLERGELTFTKQPEQGVTYAAKIDKAEARIDWAKPAHAVLRHIHGLSPFPGAWCELPIEGEAVRVKILRCELAKGSGEPGTLLDDRLAIACGDGAIRILQLQRAGKQPMQAQDFLRGTPLQPPLAVC.

111 to 114 (SLLP) lines the (6S)-5,6,7,8-tetrahydrofolate pocket.

This sequence belongs to the Fmt family.

It carries out the reaction L-methionyl-tRNA(fMet) + (6R)-10-formyltetrahydrofolate = N-formyl-L-methionyl-tRNA(fMet) + (6S)-5,6,7,8-tetrahydrofolate + H(+). In terms of biological role, attaches a formyl group to the free amino group of methionyl-tRNA(fMet). The formyl group appears to play a dual role in the initiator identity of N-formylmethionyl-tRNA by promoting its recognition by IF2 and preventing the misappropriation of this tRNA by the elongation apparatus. The sequence is that of Methionyl-tRNA formyltransferase from Rhodopseudomonas palustris (strain BisB18).